Reading from the N-terminus, the 166-residue chain is Nucleotide-binding protein Dred_1927 (166 aa).

It belongs to the YajQ family.

In terms of biological role, nucleotide-binding protein. The chain is Nucleotide-binding protein Dred_1927 from Desulforamulus reducens (strain ATCC BAA-1160 / DSM 100696 / MI-1) (Desulfotomaculum reducens).